A 155-amino-acid polypeptide reads, in one-letter code: SsrA-binding protein (155 aa).

This sequence belongs to the SmpB family.

It localises to the cytoplasm. In terms of biological role, required for rescue of stalled ribosomes mediated by trans-translation. Binds to transfer-messenger RNA (tmRNA), required for stable association of tmRNA with ribosomes. tmRNA and SmpB together mimic tRNA shape, replacing the anticodon stem-loop with SmpB. tmRNA is encoded by the ssrA gene; the 2 termini fold to resemble tRNA(Ala) and it encodes a 'tag peptide', a short internal open reading frame. During trans-translation Ala-aminoacylated tmRNA acts like a tRNA, entering the A-site of stalled ribosomes, displacing the stalled mRNA. The ribosome then switches to translate the ORF on the tmRNA; the nascent peptide is terminated with the 'tag peptide' encoded by the tmRNA and targeted for degradation. The ribosome is freed to recommence translation, which seems to be the essential function of trans-translation. The polypeptide is SsrA-binding protein (Bacillus cytotoxicus (strain DSM 22905 / CIP 110041 / 391-98 / NVH 391-98)).